The sequence spans 365 residues: Growth-regulating factor 7 (365 aa).

A QLQ domain is found at 59–94 (PFTNAQLKELERQAMIYKYMIASIPVPFDLLVSSPS). The WRC domain occupies 107–151 (DLEPGRCRRTDGKKWRCAKEVVSNHKYCEKHLHRGRPRSRKHVEP). Short sequence motifs (bipartite nuclear localization signal) lie at residues 112–122 (RCRRTDGKKWR) and 140–147 (RGRPRSRK). The segment covering 137–147 (HLHRGRPRSRK) has biased composition (basic residues). Disordered regions lie at residues 137–187 (HLHR…TLEP) and 332–365 (IESY…SSQV). A compositionally biased stretch (polar residues) spans 337–365 (LMETPTPSSSPSRVMKKMTSSVSDESSQV).

Belongs to the GRF family.

It is found in the nucleus. Functionally, transcription activator that plays a role in the regulation of cell expansion in leaf and cotyledons tissues. Component of a network formed by miR396, the GRFs and their interacting factors (GIFs) acting in the regulation of meristem function, at least partially through the control of cell proliferation. This Arabidopsis thaliana (Mouse-ear cress) protein is Growth-regulating factor 7 (GRF7).